Consider the following 223-residue polypeptide: NLP effector protein 2 (223 aa).

Positions 90 to 100 match the Conserved undecapeptide motif motif; that stretch reads AIMYSWYFPKD. The short motif at 107-113 is the Conserved p motif element; the sequence is GHRHDWE.

Belongs to the Necrosis inducing protein (NPP1) family.

The protein resides in the secreted. The protein localises to the host cytoplasm. Its function is as follows. Probable secreted effector that may act as a pathogen-associated molecular pattern (PAMP) recognized by the plant immune system. Seems not to induce necrosis, neither in several susceptible or resistant Vitis species nor in the dicot model plant Nicotiana benthamiana. The polypeptide is NLP effector protein 2 (Plasmopara viticola (Downy mildew of grapevine)).